A 367-amino-acid chain; its full sequence is Inhibin alpha chain (367 aa).

The N-terminal stretch at 1 to 20 (MVPPLPLLLLLLLVPQGGHG) is a signal peptide. Positions 21–63 (CQGSELDREIVLAKVRALFLDALGPPAVTGEGGDPGVRRLPRR) are excised as a propeptide. The propeptide at 64-233 (HALGGFARRG…PPSGGERTRR (170 aa)) is inhibin alpha N-terminal region. 2 N-linked (GlcNAc...) asparagine glycosylation sites follow: asparagine 147 and asparagine 269. 3 disulfide bridges follow: cysteine 263/cysteine 329, cysteine 292/cysteine 364, and cysteine 296/cysteine 366.

It belongs to the TGF-beta family. As to quaternary structure, dimeric, linked by one or more disulfide bonds. Activin B is a dimer of alpha and beta-B. Inhibin A is a dimer of alpha and beta-A. Inhibin B is a dimer of alpha and beta-B. Interacts with TGFBR3L; this interaction regulates female fertility. Proteolytic processing yields a number of bioactive forms, consisting either solely of the mature alpha chain, of the most N-terminal propeptide linked through a disulfide bond to the mature alpha chain, or of the entire proprotein.

It is found in the secreted. Inhibins and activins inhibit and activate, respectively, the secretion of follitropin by the pituitary gland. Inhibins/activins are involved in regulating a number of diverse functions such as hypothalamic and pituitary hormone secretion, gonadal hormone secretion, germ cell development and maturation, erythroid differentiation, insulin secretion, nerve cell survival, embryonic axial development or bone growth, depending on their subunit composition. Inhibins appear to oppose the functions of activins. Its function is as follows. Inhibin A is a dimer of alpha/INHA and beta-A/INHBA that functions as a feedback regulator in the hypothalamic-pituitary-gonadal (HPG) axis. Inhibits the secretion of FSH from the anterior pituitary gland by acting on pituitary gonadotrope cells. Antagonizes activin A by binding to the proteoglycan, betaglycan, and forming a stable complex with and, thereby, sequestering type II activin receptors while excluding type I receptor. In terms of biological role, inhibin B is a dimer of alpha and beta-B that plays a crucial role in the regulation of the reproductive system by inhibiting the secretion of follicle-stimulating hormone (FSH) from the anterior pituitary gland. Thereby, maintains reproductive homeostasis in both males and females. Acts as a more potent suppressor of FSH release than inhibin A. Functions as competitive receptor antagonist binding activin type II receptors with high affinity in the presence of the TGF-beta type III coreceptor/TGFBR3L. This chain is Inhibin alpha chain (INHA), found in Equus caballus (Horse).